A 2476-amino-acid chain; its full sequence is Non-reducing polyketide synthase ausA (2476 aa).

The N-terminal acylcarrier protein transacylase domain (SAT) stretch occupies residues 14-253; the sequence is VLFGPKYPEV…HHSNHTQAVE (240 aa). The Ketosynthase family 3 (KS3) domain occupies 379–795; the sequence is AVPIAVTGMA…GSNAAIVLRE (417 aa). Residues cysteine 544, histidine 679, and histidine 718 each act as for beta-ketoacyl synthase activity in the active site. The segment at 906 to 1210 is malonyl-CoA:ACP transacylase (MAT) domain; it reads ICFGGQTGDT…LPTDLSGAQA (305 aa). Residue serine 993 is the For acyl/malonyl transferase activity of the active site. The N-terminal hotdog fold stretch occupies residues 1277–1405; sequence QEASLVRLLR…GRVSLQAAGS (129 aa). Positions 1277–1584 constitute a PKS/mFAS DH domain; the sequence is QEASLVRLLR…FTGVSIQSLK (308 aa). The segment at 1280 to 1583 is product template (PT) domain; that stretch reads SLVRLLRQDG…TFTGVSIQSL (304 aa). Histidine 1310 serves as the catalytic Proton acceptor; for dehydratase activity. A C-terminal hotdog fold region spans residues 1433 to 1584; it reads SSSGLKRSTV…FTGVSIQSLK (152 aa). The active-site Proton donor; for dehydratase activity is aspartate 1491. Residues 1626–1700 form the Carrier domain; sequence DGDLLAVQTM…GLVQRIFPGH (75 aa). Serine 1660 is subject to O-(pantetheine 4'-phosphoryl)serine. Positions 1862–2095 are methyltransferase (CMeT) domain; it reads QHASEHKLLH…GFNWVDWTDN (234 aa). The thioesterase (TE) domain stretch occupies residues 2128–2476; it reads NTVQEQTVLY…YEFLRRHVGL (349 aa). Residues serine 2251, aspartate 2413, and histidine 2445 each act as for thioesterase activity in the active site.

It carries out the reaction 3 malonyl-CoA + acetyl-CoA + 2 S-adenosyl-L-methionine = 3,5-dimethylorsellinate + 2 S-adenosyl-L-homocysteine + 3 CO2 + 4 CoA. It functions in the pathway secondary metabolite biosynthesis; terpenoid biosynthesis. Functionally, non-reducing polyketide synthase; part of the gene cluster A that mediates the biosynthesis of austinol and dehydroaustinol, two fungal meroterpenoids. The first step of the pathway is the synthesis of 3,5-dimethylorsellinic acid by the polyketide synthase ausA. 3,5-dimethylorsellinic acid is then prenylated by the polyprenyl transferase ausN. Further epoxidation by the FAD-dependent monooxygenase ausM and cyclization by the probable terpene cyclase ausL lead to the formation of protoaustinoid A. Protoaustinoid A is then oxidized to spiro-lactone preaustinoid A3 by the combined action of the FAD-binding monooxygenases ausB and ausC, and the dioxygenase ausE. Acid-catalyzed keto-rearrangement and ring contraction of the tetraketide portion of preaustinoid A3 by ausJ lead to the formation of preaustinoid A4. The aldo-keto reductase ausK, with the help of ausH, is involved in the next step by transforming preaustinoid A4 into isoaustinone which is in turn hydroxylated by the P450 monooxygenase ausI to form austinolide. Finally, the cytochrome P450 monooxygenase ausG modifies austinolide to austinol. Austinol can be further modified to dehydroaustinol which forms a diffusible complex with diorcinol that initiates conidiation. Due to genetic rearrangements of the clusters and the subsequent loss of some enzymes, the end products of the Emericella nidulans austinoid biosynthesis clusters are austinol and dehydroaustinol, even if additional enzymes, such as the O-acetyltransferase ausQ and the cytochrome P450 monooxygenase ausR are still functional. The sequence is that of Non-reducing polyketide synthase ausA from Emericella nidulans (strain FGSC A4 / ATCC 38163 / CBS 112.46 / NRRL 194 / M139) (Aspergillus nidulans).